The following is a 612-amino-acid chain: MACPF domain-containing protein NSL1 (612 aa).

In terms of domain architecture, MACPF spans 5 to 338 (NFTRLDAHSA…PPIEELHQFL (334 aa)).

It belongs to the complement C6/C7/C8/C9 (TC 1.C.39) family.

Its function is as follows. Negatively controls the salicylic acid (SA)-mediated pathway of programmed cell death in plant immunity. The sequence is that of MACPF domain-containing protein NSL1 (NSL1) from Arabidopsis thaliana (Mouse-ear cress).